Reading from the N-terminus, the 266-residue chain is Glutamate racemase (266 aa).

Substrate contacts are provided by residues 9 to 10 (DS) and 41 to 42 (YG). The active-site Proton donor/acceptor is the Cys-72. Residue 73 to 74 (NT) participates in substrate binding. Cys-184 serves as the catalytic Proton donor/acceptor. Residue 185–186 (TH) coordinates substrate.

This sequence belongs to the aspartate/glutamate racemases family.

The catalysed reaction is L-glutamate = D-glutamate. It participates in cell wall biogenesis; peptidoglycan biosynthesis. Provides the (R)-glutamate required for cell wall biosynthesis. The polypeptide is Glutamate racemase (Staphylococcus haemolyticus (strain JCSC1435)).